An 85-amino-acid chain; its full sequence is Small ribosomal subunit protein bS16 (85 aa).

This sequence belongs to the bacterial ribosomal protein bS16 family.

This is Small ribosomal subunit protein bS16 from Nitrosomonas eutropha (strain DSM 101675 / C91 / Nm57).